The following is a 604-amino-acid chain: Kinesin-like protein KIN-14O (604 aa).

Positions 22 to 61 (MLNHDKDISALQEEISALRSRQRHLDHRRQEALDKLIDLK) form a coiled coil. Residues 63–387 (SIRVFCRVRP…LSFAKRARSI (325 aa)) form the Kinesin motor domain. 141–148 (GQTGTGKT) contacts ATP. Residues 383–443 (RARSIESSKE…EERKKLSSSA (61 aa)) adopt a coiled-coil conformation. Disordered regions lie at residues 465 to 511 (DSAE…KTRL) and 565 to 604 (SNNS…SSLT). The segment covering 565–574 (SNNSIDSTAA) has biased composition (polar residues). Positions 593–604 (LHQHRRRMSSLT) are enriched in basic residues.

The protein belongs to the TRAFAC class myosin-kinesin ATPase superfamily. Kinesin family. KIN-14 subfamily.

This is Kinesin-like protein KIN-14O from Oryza sativa subsp. japonica (Rice).